Here is a 312-residue protein sequence, read N- to C-terminus: Glyoxylate/hydroxypyruvate reductase A (312 aa).

The active site involves arginine 227. Histidine 275 acts as the Proton donor in catalysis.

Belongs to the D-isomer specific 2-hydroxyacid dehydrogenase family. GhrA subfamily.

It is found in the cytoplasm. The catalysed reaction is glycolate + NADP(+) = glyoxylate + NADPH + H(+). The enzyme catalyses (R)-glycerate + NAD(+) = 3-hydroxypyruvate + NADH + H(+). It carries out the reaction (R)-glycerate + NADP(+) = 3-hydroxypyruvate + NADPH + H(+). Its function is as follows. Catalyzes the NADPH-dependent reduction of glyoxylate and hydroxypyruvate into glycolate and glycerate, respectively. The sequence is that of Glyoxylate/hydroxypyruvate reductase A from Escherichia coli O6:K15:H31 (strain 536 / UPEC).